The sequence spans 945 residues: Oxysterol-binding protein homolog C23H4.01c (945 aa).

Residues 1 to 131 (METVEIRSKS…PKTVTFLLTA (131 aa)) form the GOLD domain. Residues 149 to 243 (KQIISGTLLK…WCNALEKAKN (95 aa)) form the PH domain. Residues S288, S419, and S421 each carry the phosphoserine modification. 2 disordered regions span residues 396–555 (ESGA…LPHS) and 846–894 (LEKD…MEEK). Positions 443-454 (TSSISDTSSNSS) are enriched in low complexity. The span at 460–470 (LNATSLASTVD) shows a compositional bias: polar residues. A compositionally biased stretch (basic and acidic residues) spans 482–499 (ESNKENDIKRKQPFHDLM). The residue at position 503 (S503) is a Phosphoserine.

The protein belongs to the OSBP family.

The protein localises to the cytoplasm. The protein is Oxysterol-binding protein homolog C23H4.01c of Schizosaccharomyces pombe (strain 972 / ATCC 24843) (Fission yeast).